The primary structure comprises 416 residues: Phosphoglycerate kinase (416 aa).

Residues V23, D24, F25, N26, Q38, R39, S62, H63, G65, R66, L121, R122, H169, and R170 each coordinate (2R)-3-phosphoglycerate. Position 213 (G213) interacts with ADP. G213 lines the CDP pocket. Residues A214 and K215 each contribute to the AMP site. Residue A214 coordinates ATP. A214 is a Mg(2+) binding site. D218 contributes to the CDP binding site. Residue D218 coordinates Mg(2+). K219 contributes to the AMP binding site. K219 provides a ligand contact to ATP. ADP is bound at residue G237. G237 is a CDP binding site. AMP is bound by residues G238 and G312. Residues G238 and G312 each contribute to the ATP site. Residues G337, A339, and F342 each coordinate CDP. F342 lines the ADP pocket. E343 is an AMP binding site. ATP-binding residues include E343, D374, and T375. Residue D374 participates in Mg(2+) binding.

The protein belongs to the phosphoglycerate kinase family. Monomer. The cofactor is Mg(2+).

It is found in the cytoplasm. The protein localises to the mitochondrion. It carries out the reaction (2R)-3-phosphoglycerate + ATP = (2R)-3-phospho-glyceroyl phosphate + ADP. Its pathway is carbohydrate degradation; glycolysis; pyruvate from D-glyceraldehyde 3-phosphate: step 2/5. Its function is as follows. Catalyzes one of the two ATP producing reactions in the glycolytic pathway via the reversible conversion of 1,3-diphosphoglycerate to 3-phosphoglycerate. Both L- and D- forms of purine and pyrimidine nucleotides can be used as substrates, but the activity is much lower on pyrimidines. Negatively regulates the biosynthesis of acetyl-CoA from pyruvate in the mitochondrion. In Funneliformis mosseae (Endomycorrhizal fungus), this protein is Phosphoglycerate kinase (PGK).